We begin with the raw amino-acid sequence, 105 residues long: Large ribosomal subunit protein eL36 (105 aa).

The disordered stretch occupies residues 1 to 20 (MAKEAPAKTGLAVGLNKGHK).

Belongs to the eukaryotic ribosomal protein eL36 family.

This chain is Large ribosomal subunit protein eL36 (rpl36), found in Trichoderma hamatum.